The primary structure comprises 440 residues: Oligodendrocyte-myelin glycoprotein (440 aa).

The first 24 residues, 1 to 24 (MEYQILKMSSCLFILLFLTPGILC), serve as a signal peptide directing secretion. Residues 25 to 55 (ICPLQCTCTERHRHVDCSGRNLTTLPPGLQE) form the LRRNT domain. N-linked (GlcNAc...) asparagine glycosylation is found at Asn45 and Asn61. 8 LRR repeats span residues 56–78 (NIIH…TPYT), 79–100 (NLRT…LPRS), 101–121 (LWNM…DTAY), 124–145 (NLKY…KNTL), 147–168 (SLEV…MPSK), 169–189 (LHIV…TLIN), 192–213 (NLTH…SFDQ), and 216–239 (QLQE…TYLL). Asn103 is a glycosylation site (N-linked (GlcNAc...) asparagine). N-linked (GlcNAc...) asparagine glycosylation is found at Asn152, Asn176, Asn189, Asn192, and Asn234. Ser/Thr-rich repeat units follow at residues 229–270 (CDHK…YPTP), 271–292 (PGFT…INSL), 293–335 (SMVT…VAYP), 336–377 (EDTP…PPSP), and 378–416 (VTLS…TRPP). N-linked (GlcNAc...) asparagine glycans are attached at residues Asn364 and Asn389. Ser417 carries the GPI-anchor amidated serine lipid modification. A propeptide spans 418–440 (AASAWKVNASLLLMLNAVVMLAG) (removed in mature form). N-linked (GlcNAc...) asparagine glycosylation occurs at Asn425.

Binds to RTN4R. In terms of processing, O-glycosylated in its Ser/Thr-rich repeat domain. As to expression, oligodendrocytes and myelin of the central nervous system.

The protein localises to the cell membrane. In terms of biological role, cell adhesion molecule contributing to the interactive process required for myelination in the central nervous system. This chain is Oligodendrocyte-myelin glycoprotein (Omg), found in Mus musculus (Mouse).